Here is a 286-residue protein sequence, read N- to C-terminus: Protein MGF 360-3L (286 aa).

A helical transmembrane segment spans residues methionine 1–alanine 17. N-linked (GlcNAc...) asparagine; by host glycosylation is present at asparagine 61. A run of 2 helical transmembrane segments spans residues histidine 128–asparagine 148 and leucine 153–alanine 173. N-linked (GlcNAc...) asparagine; by host glycosylation is found at asparagine 238 and asparagine 263.

Belongs to the asfivirus MGF 110 family.

It is found in the host membrane. Functionally, plays a role in virus cell tropism, and may be required for efficient virus replication in macrophages. In African swine fever virus (isolate Tick/Malawi/Lil 20-1/1983) (ASFV), this protein is Protein MGF 360-3L.